The sequence spans 671 residues: DNA ligase (671 aa).

Residues 32–36, 81–82, and E113 each bind NAD(+); these read DAEYD and SL. Residue K115 is the N6-AMP-lysine intermediate of the active site. Residues R136, E173, K290, and K314 each contribute to the NAD(+) site. Zn(2+)-binding residues include C408, C411, C426, and C432. The BRCT domain maps to 593 to 671; that stretch reads EIDSPFAGKT…EAEMLRLLGS (79 aa).

The protein belongs to the NAD-dependent DNA ligase family. LigA subfamily. Mg(2+) is required as a cofactor. Requires Mn(2+) as cofactor.

The catalysed reaction is NAD(+) + (deoxyribonucleotide)n-3'-hydroxyl + 5'-phospho-(deoxyribonucleotide)m = (deoxyribonucleotide)n+m + AMP + beta-nicotinamide D-nucleotide.. Its function is as follows. DNA ligase that catalyzes the formation of phosphodiester linkages between 5'-phosphoryl and 3'-hydroxyl groups in double-stranded DNA using NAD as a coenzyme and as the energy source for the reaction. It is essential for DNA replication and repair of damaged DNA. The sequence is that of DNA ligase from Escherichia coli O7:K1 (strain IAI39 / ExPEC).